We begin with the raw amino-acid sequence, 258 residues long: UDP-2,3-diacylglucosamine hydrolase (258 aa).

Positions 15, 17, 48, 88, and 123 each coordinate Mn(2+). Residue 88–89 (NR) participates in substrate binding. Substrate is bound by residues Asp131, Ser169, Asn173, Lys176, and His204. Mn(2+)-binding residues include His204 and His206.

The protein belongs to the LpxH family. Mn(2+) is required as a cofactor.

It is found in the cell inner membrane. It catalyses the reaction UDP-2-N,3-O-bis[(3R)-3-hydroxytetradecanoyl]-alpha-D-glucosamine + H2O = 2-N,3-O-bis[(3R)-3-hydroxytetradecanoyl]-alpha-D-glucosaminyl 1-phosphate + UMP + 2 H(+). It participates in glycolipid biosynthesis; lipid IV(A) biosynthesis; lipid IV(A) from (3R)-3-hydroxytetradecanoyl-[acyl-carrier-protein] and UDP-N-acetyl-alpha-D-glucosamine: step 4/6. Its function is as follows. Hydrolyzes the pyrophosphate bond of UDP-2,3-diacylglucosamine to yield 2,3-diacylglucosamine 1-phosphate (lipid X) and UMP by catalyzing the attack of water at the alpha-P atom. Involved in the biosynthesis of lipid A, a phosphorylated glycolipid that anchors the lipopolysaccharide to the outer membrane of the cell. This is UDP-2,3-diacylglucosamine hydrolase from Bordetella bronchiseptica (strain ATCC BAA-588 / NCTC 13252 / RB50) (Alcaligenes bronchisepticus).